A 318-amino-acid polypeptide reads, in one-letter code: MCSGNQTSQNQTASTDFTLTGLFAESKHAALLYTVTFLLFLMALTGNALLILLIHSEPRLHTPMYFFISQLALMDLMYLCVTVPKMLVGQVTGDDTISPSGCGIQMFFHLTLAGAEVFLLAAMAYDRYAAVCRPLHYPLLMNQRVCQLLVSACWVLGMVDGLLLTPITMSFPFCQSRKILSFFCETPALLKLSCSDVSLYKMLTYLCCILMLLTPIMVISSSYTLILHLIHRMNSAAGRRKALATCSSHMIIVLLLFGASFYTYMLRSSYHTAEQDMMVSAFYTIFTPVLNPLIYSLRNKDVTRALRSMMQSRMNQEK.

At 1 to 30 (MCSGNQTSQNQTASTDFTLTGLFAESKHAA) the chain is on the extracellular side. 2 N-linked (GlcNAc...) asparagine glycosylation sites follow: Asn-5 and Asn-10. The helical transmembrane segment at 31-54 (LLYTVTFLLFLMALTGNALLILLI) threads the bilayer. The Cytoplasmic segment spans residues 55–62 (HSEPRLHT). The helical transmembrane segment at 63 to 84 (PMYFFISQLALMDLMYLCVTVP) threads the bilayer. Topologically, residues 85–105 (KMLVGQVTGDDTISPSGCGIQ) are extracellular. Cys-102 and Cys-194 are oxidised to a cystine. Residues 106–125 (MFFHLTLAGAEVFLLAAMAY) form a helical membrane-spanning segment. Over 126–144 (DRYAAVCRPLHYPLLMNQR) the chain is Cytoplasmic. A helical transmembrane segment spans residues 145–163 (VCQLLVSACWVLGMVDGLL). Residues 164 to 200 (LTPITMSFPFCQSRKILSFFCETPALLKLSCSDVSLY) lie on the Extracellular side of the membrane. A helical transmembrane segment spans residues 201–224 (KMLTYLCCILMLLTPIMVISSSYT). Over 225 to 241 (LILHLIHRMNSAAGRRK) the chain is Cytoplasmic. Residues 242–264 (ALATCSSHMIIVLLLFGASFYTY) traverse the membrane as a helical segment. The Extracellular segment spans residues 265-277 (MLRSSYHTAEQDM). Residues 278 to 297 (MVSAFYTIFTPVLNPLIYSL) form a helical membrane-spanning segment. The Cytoplasmic portion of the chain corresponds to 298–318 (RNKDVTRALRSMMQSRMNQEK).

Belongs to the G-protein coupled receptor 1 family.

The protein resides in the cell membrane. Functionally, odorant receptor. The chain is Olfactory receptor 2T34 (OR2T34) from Homo sapiens (Human).